We begin with the raw amino-acid sequence, 964 residues long: Myocardin-related transcription factor A (964 aa).

A mediates interaction with SCAI and ACTB region spans residues 1-291 (MTLLEPEMLM…KQDKGAPAMD (291 aa)). One copy of the RPEL 1 repeat lies at 15–40 (SVLQLKLQQRRTREELVSQGIMPPLK). Serine 41 carries the post-translational modification Phosphoserine. The interval 41 to 58 (SPAAFHEQRRSLERARTE) is intervening spacer sequence 1. One copy of the RPEL 2 repeat lies at 59–84 (DYLKRKIRSRPERAELVRMHILEETS). The Bipartite Nuclear localization signal signature appears at 62–100 (KRKIRSRPERAELVRMHILEETSAEPSLQAKQLKLKRAR). Positions 85 to 102 (AEPSLQAKQLKLKRARLA) are intervening spacer sequence 2. An RPEL 3 repeat occupies 103–128 (DDLNEKIAQRPGPMELVEKNILPVES). Disordered stretches follow at residues 145–292 (ADSS…AMDS) and 328–371 (LPAP…RQSS). Residues serine 159, serine 174, and serine 191 each carry the phosphoserine modification. Residues 186–197 (SATSISPTQVLS) show a composition bias toward polar residues. Over residues 215-224 (PPLPPAPLLP) the composition is skewed to pro residues. Residues 251–266 (ASEKSQRSKKAKELKP) are compositionally biased toward basic and acidic residues. Residues 340 to 365 (GSSAPTPSRSLSTSSSPSSGTPGPSG) are compositionally biased toward low complexity. Phosphoserine is present on residues serine 349 and serine 351. A Phosphothreonine modification is found at threonine 352. Residues serine 355 and serine 358 each carry the phosphoserine modification. Threonine 360 carries the phosphothreonine modification. Position 371 is a phosphoserine (serine 371). One can recognise an SAP domain in the interval 385–419 (LDDMKVAELKQELKLRSLPVSGTKTELIERLRAYQ). Residues serine 423 and serine 484 each carry the phosphoserine modification. The segment at 484-508 (STGSTPPVSPTPSERSLLSTGDENS) is disordered. Residue threonine 485 is modified to Phosphothreonine. Serine 487 carries the post-translational modification Phosphoserine. Threonine 488 carries the phosphothreonine modification. A Phosphoserine modification is found at serine 492. Threonine 494 is subject to Phosphothreonine. Serine 496 is subject to Phosphoserine. The segment covering 497–508 (ERSLLSTGDENS) has biased composition (polar residues). Phosphoserine is present on residues serine 520, serine 530, serine 544, and serine 548. The stretch at 552-600 (RAELEGLDKDQMLQEKDKQIEELTRMLQQKQQLVELLRLQLEQQKRAQQ) forms a coiled coil. Residues serine 605, serine 606, serine 651, serine 687, serine 718, serine 724, and serine 728 each carry the phosphoserine modification. The segment at 638–673 (TTNHGDTQAPAPESPPVVVKQEAGPPEPDLAPSSQL) is disordered. Disordered regions lie at residues 706 to 779 (NKSA…SSSQ) and 796 to 849 (ADFK…RLED). The span at 715 to 727 (PAGSPQQPLSQPG) shows a compositional bias: low complexity. The span at 764–779 (TVTQQPKQQENGSSSQ) shows a compositional bias: polar residues. Residues 796–810 (ADFKEPPSLPGKEKS) are compositionally biased toward basic and acidic residues. Serine 810 carries the phosphoserine modification. Threonine 822 carries the phosphothreonine modification. Residues serine 826 and serine 840 each carry the phosphoserine modification. Phosphothreonine is present on threonine 842. Serine 892 bears the Phosphoserine mark.

As to quaternary structure, interacts with SRF, forming the SRF-MRTFA nuclear complex which binds the 5'-CArG-3' consensus motif (CArG box) on DNA via SRF. Interacts (via RPEL repeats) with globular actin (G-actin), thereby regulating its subcellular location and activity of the complex formed with SRF. Either forms a trivalent (by binding three G-actin monomers) or pentavalent (by binding five G-actin monomers) complex with G-actin. Forms a nuclear ternary complex with SCAI and SRF, leading to suppress MRTFA-induced SRF transcriptional activity. Interacts with beta-actin (ACTB); interaction with ACTB prevents interaction with SCAI. Interacts with MRTFB. Phosphorylation at Ser-41 by Erk inhibits binding of globular actin (G-actin), unmasking the nuclear localization signal (NLS) and promoting nuclear import. Expressed in heart, brain, spleen, lung, liver, muscle, kidney and testis.

Its subcellular location is the cytoplasm. It is found in the nucleus. Functionally, transcription coactivator that associates with the serum response factor (SRF) transcription factor to control expression of genes regulating the cytoskeleton during development, morphogenesis and cell migration. The SRF-MRTFA complex activity responds to Rho GTPase-induced changes in cellular globular actin (G-actin) concentration, thereby coupling cytoskeletal gene expression to cytoskeletal dynamics. MRTFA binds G-actin via its RPEL repeats, regulating activity of the MRTFA-SRF complex. Activity is also regulated by filamentous actin (F-actin) in the nucleus. In Mus musculus (Mouse), this protein is Myocardin-related transcription factor A (Mrtfa).